Reading from the N-terminus, the 402-residue chain is Type II NADH:quinone oxidoreductase (402 aa).

FAD contacts are provided by residues 12-16, 39-40, and Val-83; these read GAGYA and NK. Glu-172 is a catalytic residue. FAD is bound by residues Asp-302, 319–320, and Lys-379; that span reads AQ.

It belongs to the NADH dehydrogenase family. FAD is required as a cofactor.

The protein resides in the cell membrane. It catalyses the reaction a quinone + NADH + H(+) = a quinol + NAD(+). Alternative, nonproton pumping NADH:quinone oxidoreductase that delivers electrons to the respiratory chain by oxidation of NADH and reduction of quinones, and contributes to the regeneration of NAD(+). In Staphylococcus epidermidis (strain ATCC 35984 / DSM 28319 / BCRC 17069 / CCUG 31568 / BM 3577 / RP62A), this protein is Type II NADH:quinone oxidoreductase.